The chain runs to 517 residues: MIFLAPFEFLDPLRHALPLTCTGLIIIFAFYLSRHHSPKPAPNIPIHSYDREEYFRRGYELVQEGQKKHPSCFQLRTATGWKILVPIRFVEELRKNPSLSFARGNDKDAFIEYPGFEAMEAACHDDYFMQEVVRVKLTQTLNLLYSSVIDESAVAMSEVLGEDKIWRTLRIKDDINHIVARVTSRVFLGFPLCRNQKWLDIVVNHTKAVFMAQKRMRQTPPALRPLIHYFLPETKLLRQHLHAARTLISPELAKRRAAVEEALRHGKIPKESANAISWMVEVSQAQGRKIDVAVHVVSLSMTAIQTTSEVMTNCILQLCETPSIVDDLRAEIIFLLKEGGWTKYTLYKMRLLDSFIREVMRHHDFLRVTSWRGCTEDVVLSDGTVLPKGSCIYFDDSKVVDPEHYPDPEKFDPMRSFKKREQPGQEDRHQFVSLQTDHMAFGYGIHACPGRFFANMELKVMLCNFLLKYDVRLVPGEKRPVDILFEVQRMVPPDVRVQIKVRDQEPEVDLYSPISST.

A helical membrane pass occupies residues 16-33 (ALPLTCTGLIIIFAFYLS). An N-linked (GlcNAc...) asparagine glycan is attached at Asn204. Heme is bound at residue Cys448.

Belongs to the cytochrome P450 family. Heme is required as a cofactor.

The protein localises to the membrane. It participates in mycotoxin biosynthesis. Functionally, cytochrome P450 monooxygenase; part of the gene cluster that mediates the biosynthesis of the diterpene glucoside brassicicene C. In the first step of the brassicicene C biosynthesis, the bifunctional diterpene synthase bsc8 that possesses both prenyl transferase and terpene cyclase activity, converts isopentenyl diphosphate and dimethylallyl diphosphate into geranylgeranyl diphosphate (GGDP) that is further converted into fusicocca-2,10(14)-diene, the first precursor for brassicicene C. Fusicocca-2,10(14)-diene is then substrate of cytochrome P450 monooxygenase bsc1 for hydroxylation at the C-8 position. Oxidation at C-16 position to aldehyde is then catalyzed by the cytochrome P450 monooyxygenase bsc7, yielding fusicocca-2,10(14)-diene-8-beta,16-diol. Follows the isomerization of the double bond and reduction of aldehyde to alcohol catalyzed by the short-chain dehydrogenase/reductase bsc3 to yield the diol compound fusicocca-1,10(14)-diene-8 beta,16-diol. The next step is the oxidation at the C-3 position of fusicocca-2,10(14)-diene-8-beta,16-diol catalyzed by the alpha-ketoglutarate dependent dioxygenase bsc9, to produce a triol compound. Methylation of the hydroxy group at position 16 is performed by the methyltransferase bsc6. 16-O-methylation is followed by oxidation at the C-13 position to ketone and an alkyl shift of the methyl group leads to brassicicene C. Although the probable acetyltransferase bsc4 is included in the gene cluster, no acetylation reactions are necessary for brassicicene C biosynthesis. However, the fact that brassicicene E, which is a structurally related compound having an acetoxy group at position 12, was previously isolated from another strain of A.brassicicola suggests that the ATCC 96836 strain might also produce a small amount of brassicicene E. The protein is Cytochrome P450 monooxygenase bsc11 of Alternaria brassicicola (Dark leaf spot agent).